A 152-amino-acid chain; its full sequence is Large ribosomal subunit protein uL13 (152 aa).

It belongs to the universal ribosomal protein uL13 family. As to quaternary structure, part of the 50S ribosomal subunit.

In terms of biological role, this protein is one of the early assembly proteins of the 50S ribosomal subunit, although it is not seen to bind rRNA by itself. It is important during the early stages of 50S assembly. The polypeptide is Large ribosomal subunit protein uL13 (Wolbachia sp. subsp. Drosophila simulans (strain wRi)).